The chain runs to 67 residues: Brevinin-1CDYc (67 aa).

The N-terminal stretch at 1–22 (MFTLKKSLLLIFFLGTINLSLC) is a signal peptide. The propeptide occupies 23 to 45 (EEERNADEEERRDDPEERDVEVE). A disulfide bond links C61 and C67.

This sequence belongs to the frog skin active peptide (FSAP) family. Brevinin subfamily. Expressed by the skin glands.

It is found in the secreted. In terms of biological role, antimicrobial peptide. The polypeptide is Brevinin-1CDYc (Rana huanrensis (Huanren frog)).